A 294-amino-acid polypeptide reads, in one-letter code: Indole-3-glycerol phosphate synthase (294 aa).

This sequence belongs to the TrpC family.

The enzyme catalyses 1-(2-carboxyphenylamino)-1-deoxy-D-ribulose 5-phosphate + H(+) = (1S,2R)-1-C-(indol-3-yl)glycerol 3-phosphate + CO2 + H2O. The protein operates within amino-acid biosynthesis; L-tryptophan biosynthesis; L-tryptophan from chorismate: step 4/5. This Parasynechococcus marenigrum (strain WH8102) protein is Indole-3-glycerol phosphate synthase.